A 90-amino-acid polypeptide reads, in one-letter code: Cytochrome c7 (90 aa).

The N-terminal stretch at 1 to 20 is a signal peptide; sequence MKRIIASLALSVFCAGLAFA. Residues H37, H40, C47, C50, H51, H67, C70, C73, H74, C84, C87, and H88 each contribute to the heme site.

Post-translationally, binds 3 heme groups per subunit.

In terms of biological role, may be involved in anaerobic iron respiration. This chain is Cytochrome c7, found in Geobacter metallireducens (strain ATCC 53774 / DSM 7210 / GS-15).